A 335-amino-acid chain; its full sequence is Glyceraldehyde-3-phosphate dehydrogenase (335 aa).

Residues 11-12 (RI), aspartate 33, and lysine 78 each bind NAD(+). Residues 148 to 150 (SST), threonine 179, 208 to 209 (TG), and arginine 231 each bind D-glyceraldehyde 3-phosphate. Residue asparagine 313 participates in NAD(+) binding.

Belongs to the glyceraldehyde-3-phosphate dehydrogenase family. Homotetramer.

The protein localises to the cytoplasm. It carries out the reaction D-glyceraldehyde 3-phosphate + phosphate + NAD(+) = (2R)-3-phospho-glyceroyl phosphate + NADH + H(+). It participates in carbohydrate degradation; glycolysis; pyruvate from D-glyceraldehyde 3-phosphate: step 1/5. This Pleurotus sajor-caju (Oyster mushroom) protein is Glyceraldehyde-3-phosphate dehydrogenase (GPD).